The sequence spans 284 residues: 4-hydroxy-3-methylbut-2-enyl diphosphate reductase (284 aa).

Residue cysteine 12 participates in [4Fe-4S] cluster binding. (2E)-4-hydroxy-3-methylbut-2-enyl diphosphate-binding residues include histidine 40 and histidine 72. Dimethylallyl diphosphate is bound by residues histidine 40 and histidine 72. Histidine 40 and histidine 72 together coordinate isopentenyl diphosphate. Cysteine 94 serves as a coordination point for [4Fe-4S] cluster. Position 122 (histidine 122) interacts with (2E)-4-hydroxy-3-methylbut-2-enyl diphosphate. Residue histidine 122 coordinates dimethylallyl diphosphate. Isopentenyl diphosphate is bound at residue histidine 122. The active-site Proton donor is the glutamate 124. Threonine 161 is a (2E)-4-hydroxy-3-methylbut-2-enyl diphosphate binding site. Residue cysteine 193 coordinates [4Fe-4S] cluster. (2E)-4-hydroxy-3-methylbut-2-enyl diphosphate-binding residues include serine 221, asparagine 223, and serine 264. Dimethylallyl diphosphate is bound by residues serine 221, asparagine 223, and serine 264. 3 residues coordinate isopentenyl diphosphate: serine 221, asparagine 223, and serine 264.

The protein belongs to the IspH family. It depends on [4Fe-4S] cluster as a cofactor.

It catalyses the reaction isopentenyl diphosphate + 2 oxidized [2Fe-2S]-[ferredoxin] + H2O = (2E)-4-hydroxy-3-methylbut-2-enyl diphosphate + 2 reduced [2Fe-2S]-[ferredoxin] + 2 H(+). The catalysed reaction is dimethylallyl diphosphate + 2 oxidized [2Fe-2S]-[ferredoxin] + H2O = (2E)-4-hydroxy-3-methylbut-2-enyl diphosphate + 2 reduced [2Fe-2S]-[ferredoxin] + 2 H(+). It participates in isoprenoid biosynthesis; dimethylallyl diphosphate biosynthesis; dimethylallyl diphosphate from (2E)-4-hydroxy-3-methylbutenyl diphosphate: step 1/1. It functions in the pathway isoprenoid biosynthesis; isopentenyl diphosphate biosynthesis via DXP pathway; isopentenyl diphosphate from 1-deoxy-D-xylulose 5-phosphate: step 6/6. Its function is as follows. Catalyzes the conversion of 1-hydroxy-2-methyl-2-(E)-butenyl 4-diphosphate (HMBPP) into a mixture of isopentenyl diphosphate (IPP) and dimethylallyl diphosphate (DMAPP). Acts in the terminal step of the DOXP/MEP pathway for isoprenoid precursor biosynthesis. In Dehalococcoides mccartyi (strain ATCC BAA-2100 / JCM 16839 / KCTC 5957 / BAV1), this protein is 4-hydroxy-3-methylbut-2-enyl diphosphate reductase.